The following is a 624-amino-acid chain: Alpha-amylase 1 (624 aa).

The N-terminal stretch at 1–28 is a signal peptide; it reads MLLINFFIAVLGVISLSPIVVARYILRR. One can recognise a CBM21 domain in the interval 40 to 133; the sequence is ESVTGSNHVQ…SDTSVTYTTS (94 aa). Residues cysteine 177 and cysteine 185 are joined by a disulfide bond. Tryptophan 230 provides a ligand contact to substrate. Asparagine 268 provides a ligand contact to Ca(2+). Histidine 269 contributes to the substrate binding site. Cysteine 297 and cysteine 311 are oxidised to a cystine. Asparagine 304 carries an N-linked (GlcNAc...) asparagine glycan. Positions 309 and 322 each coordinate Ca(2+). Asparagine 344 is a glycosylation site (N-linked (GlcNAc...) asparagine). Arginine 351 contributes to the substrate binding site. Ca(2+) contacts are provided by aspartate 353, histidine 357, and glutamate 377. Aspartate 353 functions as the Nucleophile in the catalytic mechanism. 356 to 357 is a binding site for substrate; the sequence is KH. Glutamate 377 (proton donor) is an active-site residue. Glycine 381 is a substrate binding site. Cysteine 387 and cysteine 430 are oxidised to a cystine. Positions 444 and 491 each coordinate substrate. Cysteine 587 and cysteine 622 form a disulfide bridge.

This sequence belongs to the glycosyl hydrolase 13 family. The cofactor is Ca(2+).

The protein localises to the secreted. The enzyme catalyses Endohydrolysis of (1-&gt;4)-alpha-D-glucosidic linkages in polysaccharides containing three or more (1-&gt;4)-alpha-linked D-glucose units.. This Lipomyces kononenkoae (Yeast) protein is Alpha-amylase 1 (LKA1).